The chain runs to 475 residues: Adenosylhomocysteinase (475 aa).

Substrate-binding residues include Thr-61, Asp-140, and Glu-200. Residue 201–203 coordinates NAD(+); the sequence is TTT. Positions 230 and 234 each coordinate substrate. Residues Asn-235, 264–269, Glu-287, Asn-322, 343–345, and Asn-388 each bind NAD(+); these read GYGDVG and IGH.

This sequence belongs to the adenosylhomocysteinase family. It depends on NAD(+) as a cofactor.

The protein resides in the cytoplasm. It catalyses the reaction S-adenosyl-L-homocysteine + H2O = L-homocysteine + adenosine. The protein operates within amino-acid biosynthesis; L-homocysteine biosynthesis; L-homocysteine from S-adenosyl-L-homocysteine: step 1/1. Functionally, may play a key role in the regulation of the intracellular concentration of adenosylhomocysteine. The polypeptide is Adenosylhomocysteinase (Paracidovorax citrulli (strain AAC00-1) (Acidovorax citrulli)).